Consider the following 242-residue polypeptide: Vacuole localized DSC protein 1 (242 aa).

A run of 2 helical transmembrane segments spans residues 128–148 (PYGF…PTAF) and 152–172 (LLLV…INGS).

As to quaternary structure, part of the vacuole-localized DSC E3 ligase complex composed of at least TUL1, DSC2, DSC3, UBX3, CDC48 and VLD1.

It is found in the vacuole membrane. Component of the vacuole-localized DSC E3 ubiquitin ligase complex involved in the targeting of the complex to the vacuole membrane via the AP3 pathway to ubiquinate vacuolar membrane proteins. Competes with GLD1 to determine the subcellular localizations of the DSC complex. The sequence is that of Vacuole localized DSC protein 1 from Saccharomyces cerevisiae (strain ATCC 204508 / S288c) (Baker's yeast).